The chain runs to 305 residues: Ribonuclease BN (305 aa).

Zn(2+)-binding residues include His64, His66, Asp68, His69, His141, Asp212, and His270. Asp68 (proton acceptor) is an active-site residue.

This sequence belongs to the RNase Z family. RNase BN subfamily. Homodimer. The cofactor is Zn(2+).

In terms of biological role, zinc phosphodiesterase, which has both exoribonuclease and endoribonuclease activities. The polypeptide is Ribonuclease BN (Shigella boydii serotype 18 (strain CDC 3083-94 / BS512)).